The chain runs to 176 residues: Sigma intracellular receptor 2 (176 aa).

At 1–9 (MGAPATRRC) the chain is on the cytoplasmic side. Residues 10–30 (VEWLLGLYFLSHIPITLFMDL) form a helical membrane-spanning segment. The 149-residue stretch at 10–158 (VEWLLGLYFL…PYLLIPFILL (149 aa)) folds into the EXPERA domain. The Lumenal segment spans residues 31–68 (QAVLPRELYPVEFRNLLKWYAKEFKDPLLQEPPAWFKS). Residues 69–89 (FLFCELVFQLPFFPIATYAFL) traverse the membrane as a helical segment. Cholesterol contacts are provided by V75 and Q77. The Cytoplasmic segment spans residues 90–99 (KGSCKWIRTP). A helical transmembrane segment spans residues 100–120 (AIIYSVHTMTTLIPILSTFLF). A required for interaction with Hst1/HTN1 region spans residues 108–176 (MTTLIPILST…YKYEEKRKKK (69 aa)). Over 121–140 (EDFSKASGFKGQRPETLHER) the chain is Lumenal. The helical transmembrane segment at 141 to 161 (LTLVSVYAPYLLIPFILLIFM) threads the bilayer. Residues 162–176 (LRSPYYKYEEKRKKK) lie on the Cytoplasmic side of the membrane. The short motif at 172–176 (KRKKK) is the ER retention motif element.

The protein belongs to the TMEM97/sigma-2 receptor family. Homodimer. Interacts with NPC1; the interaction impairs NPC1-mediated cholesterol transport. Interacts with PGRMC1 and LDLR; the interaction increases LDL internalization. Interacts with histatin 1/HTN1; the interaction induces HTN1-stimulating wound healing. Interacts with TSPO. Forms a complex with TSPO and PGRMC1; the interaction occurs in MIA PaCa-2 cells but not in MCF7 cells. In terms of tissue distribution, widely expressed in normal tissues. Expressed in pancreatic, renal, breast, colon, ovarian surface epithelial (OSE) cells. Highly expressed in various proliferating cancer cells.

It is found in the rough endoplasmic reticulum membrane. The protein localises to the nucleus membrane. Functionally, sigma-2 receptor which contributes to ameliorate dysfunctional cellular processes and slow degenerative progression by regulating cell functions including cholesterol biosynthesis/trafficking, membrane trafficking, autophagy, lipid membrane-bound protein trafficking, and receptor stabilization at the cell surface. Forms a ternary complex with PGRMC1 receptor and low density lipoprotein receptor/LDLR at the plasma membrane, which increases LDLR-mediated LDL cholesterol internalization. Decreases lysosomal sterol transporter NPC1 availability to the cell, probably through NPC1-binding, hence controlling lipid transport, including cholesterol and LBPA, outside of late endosome/lysosome. Binds regio- and stereoselective ligand 20(S)-hydroxycholesterol (20(S)-OHC) which enhances TMEM97-NPC1 interaction and decreases TMEM97-PGRMC1 and TMEM97-TSPO interactions, thereby linking OHC binding to cholesterol homeostasis. Also able to bind cholesterol. Binds histatin 1 (Hst 1)/HN1 salivary peptide at the ER membrane, which is critical for increasing mitochondria-ER contacts and stimulating Hst1 wound healing properties. May alter the activity of some cytochrome P450 proteins. Although shows homologies with sterol isomerases (EXPERA domain), not able to catalyze sterol isomerization. However, may act as sensors of these molecules. Acts as a quality control factor in the ER, promoting the proteolytic degradation of nonproductive and extramitochondrial precursor proteins in the ER membrane thus removing them from the ER surface. This is Sigma intracellular receptor 2 from Homo sapiens (Human).